The sequence spans 214 residues: Acetoin utilization protein AcuB (214 aa).

2 consecutive CBS domains span residues 7–66 and 78–135; these read MKRD…ENKR and MKKD…GADQ.

In terms of assembly, interacts with YabA.

It functions in the pathway ketone degradation; acetoin degradation. Role in growth and sporulation on acetoin or butanediol. Involved in the breakdown of these compounds used as a carbon source. The chain is Acetoin utilization protein AcuB (acuB) from Bacillus subtilis (strain 168).